Here is a 525-residue protein sequence, read N- to C-terminus: GMP synthase [glutamine-hydrolyzing] (525 aa).

In terms of domain architecture, Glutamine amidotransferase type-1 spans 9–207 (RILILDFGSQ…VLDICGCAAL (199 aa)). Catalysis depends on cysteine 86, which acts as the Nucleophile. Catalysis depends on residues histidine 181 and glutamate 183. Positions 208–400 (WTPSNIVDDA…LGLPYDMVYR (193 aa)) constitute a GMPS ATP-PPase domain. 235 to 241 (SGGVDSS) serves as a coordination point for ATP.

In terms of assembly, homodimer.

It carries out the reaction XMP + L-glutamine + ATP + H2O = GMP + L-glutamate + AMP + diphosphate + 2 H(+). The protein operates within purine metabolism; GMP biosynthesis; GMP from XMP (L-Gln route): step 1/1. Its function is as follows. Catalyzes the synthesis of GMP from XMP. This is GMP synthase [glutamine-hydrolyzing] from Pseudomonas aeruginosa (strain LESB58).